A 166-amino-acid polypeptide reads, in one-letter code: Eukaryotic translation initiation factor 5A (166 aa).

Hypusine is present on K52. The interval 99–125 (DREDPSKPAHLSLMDDEGETRDNLDMP) is disordered.

Belongs to the eIF-5A family. Post-translationally, lys-52 undergoes hypusination, a unique post-translational modification that consists in the addition of a butylamino group from spermidine to lysine side chain, leading to the formation of the unusual amino acid hypusine. eIF-5As are the only known proteins to undergo this modification, which is essential for their function. Hypusination is mediated by the consecutive action of deoxyhypusine synthase DHSc and deoxyhypusine hydroxylase DOHH.

It is found in the cytoplasm. Its function is as follows. Translation factor that promotes translation elongation and termination, particularly upon ribosome stalling at specific amino acid sequence contexts. Binds between the exit (E) and peptidyl (P) site of the ribosome and promotes rescue of stalled ribosome: specifically required for efficient translation of polyproline-containing peptides as well as other motifs that stall the ribosome. Acts as a ribosome quality control (RQC) cofactor by joining the RQC complex to facilitate peptidyl transfer during CAT tailing step. Required for cell growth during both bloodstream (BF) and insect procyclic (PF) life cycle stages and for survival of the bloodstream form. This Trypanosoma brucei brucei (strain 927/4 GUTat10.1) protein is Eukaryotic translation initiation factor 5A.